The chain runs to 486 residues: Intermediate cleaving peptidase 55 (486 aa).

Residues 1–19 (MSGYIRTLFIRNRFSNYRL) constitute a mitochondrion transit peptide. Mn(2+) contacts are provided by Asp-317, Asp-328, His-407, Glu-434, and Glu-457.

It belongs to the peptidase M24B family. The cofactor is Mn(2+).

Its subcellular location is the mitochondrion inner membrane. It catalyses the reaction The enzyme cleaves the 36-Pro-Pro-37 bond of cysteine desulfurase (EC 2.8.1.7) removing three amino acid residues (Tyr-Ser-Pro) from the N-terminus after cleavage by mitochondrial processing peptidase.. Its function is as follows. Aminopeptidase which cleaves preprotein intermediates that carry destabilizing N-ter amino acid residues after the mitochondrial processing peptidase (MPP) cleavage site and is thus critical for stabilization of the mitochondrial proteome. The chain is Intermediate cleaving peptidase 55 (icp55) from Schizosaccharomyces pombe (strain 972 / ATCC 24843) (Fission yeast).